A 207-amino-acid chain; its full sequence is Ras-related protein Rab7 (207 aa).

Residues 15-22, 34-40, 63-67, 125-128, and 156-157 each bind GTP; these read GDSSVGKT, SNQYKAT, DTAGQ, NKVD, and AK. The Effector region signature appears at 37-45; it reads YKATIGADF. Residues C205 and C207 are each lipidated (S-geranylgeranyl cysteine).

The protein belongs to the small GTPase superfamily. Rab family. In terms of tissue distribution, expressed in eye (at protein level).

Its subcellular location is the early endosome membrane. The protein resides in the late endosome membrane. The protein localises to the lysosome membrane. It is found in the cytoplasmic vesicle. It localises to the autophagosome membrane. Its subcellular location is the autolysosome membrane. The protein resides in the presynapse. The protein localises to the perikaryon. It carries out the reaction GTP + H2O = GDP + phosphate + H(+). In terms of biological role, small GTPase which cycles between active GTP-bound and inactive GDP-bound states. In its active state, binds to a variety of effector proteins playing a key role in the regulation of endo-lysosomal trafficking. Involved in microtubule minus and plus end-directed endosomal migration and positioning, and endosome-lysosome transport through different protein-protein interaction cascades. Governs early-to-late endosomal to lysosomal maturation. Controls endocytic cargo sorting towards the late endosome facilitating its eventual endolysosomal-mediated degradation. Together with Rab2 involved in promoting fusion of autophagosomes and endosomes with lysosomes probably through recruitment of the HOPS tethering complex. Involved in biosynthetic transport to lysosomes. Involved in establishing morphogen concentration gradients, for example of the TGF-beta homolog dpp/decapentaplegic, during pattern formation and organogenesis. Together with the Mon1-Ccz1 complex, required for autolysosome formation in fat cells and autophagic degradation during starvation-induced basal and developmental autophagy. Together with Mon1, regulates levels of postsynaptic glutamate receptor GluRIIA in the neuromuscular junction (NMJ) presynapse. Required for autophagocytosis-dependent remodeling of myofibrils and transverse-tubules (T-tubules) during metamorphosis. Involved in intracellular trafficking of the carbohydrate transporter Tret1 in glial cells of the blood brain barrier, influencing its subcellular localization and protein levels. The polypeptide is Ras-related protein Rab7 (Drosophila melanogaster (Fruit fly)).